The chain runs to 325 residues: Tetraacyldisaccharide 4'-kinase (325 aa).

Position 55–62 (55–62 (TAGGNGKT)) interacts with ATP.

This sequence belongs to the LpxK family.

It carries out the reaction a lipid A disaccharide + ATP = a lipid IVA + ADP + H(+). The protein operates within glycolipid biosynthesis; lipid IV(A) biosynthesis; lipid IV(A) from (3R)-3-hydroxytetradecanoyl-[acyl-carrier-protein] and UDP-N-acetyl-alpha-D-glucosamine: step 6/6. In terms of biological role, transfers the gamma-phosphate of ATP to the 4'-position of a tetraacyldisaccharide 1-phosphate intermediate (termed DS-1-P) to form tetraacyldisaccharide 1,4'-bis-phosphate (lipid IVA). The sequence is that of Tetraacyldisaccharide 4'-kinase from Salmonella heidelberg (strain SL476).